The primary structure comprises 156 residues: Riboflavin synthase (156 aa).

It belongs to the DMRL synthase family.

The catalysed reaction is 2 6,7-dimethyl-8-(1-D-ribityl)lumazine + H(+) = 5-amino-6-(D-ribitylamino)uracil + riboflavin. Its pathway is cofactor biosynthesis; riboflavin biosynthesis; riboflavin from 2-hydroxy-3-oxobutyl phosphate and 5-amino-6-(D-ribitylamino)uracil: step 2/2. The sequence is that of Riboflavin synthase (ribC) from Methanocaldococcus jannaschii (strain ATCC 43067 / DSM 2661 / JAL-1 / JCM 10045 / NBRC 100440) (Methanococcus jannaschii).